The following is a 481-amino-acid chain: Thiol protease (481 aa).

The region spanning 169 to 481 is the Calpain catalytic domain; that stretch reads DLREQALSST…ENFWYIAYMY (313 aa). Catalysis depends on residues Cys229, His406, and Asn426.

This sequence belongs to the peptidase C2 family.

Its activity is regulated as follows. Inactive below 20 degrees Celsius and pH 6.0. Inhibited by divalent cations. Functionally, thiol protease. Probably an important virulence factor. In Porphyromonas gingivalis (strain ATCC BAA-308 / W83), this protein is Thiol protease (tpr).